The chain runs to 316 residues: 2,3-dihydroxyphenylpropionate/2,3-dihydroxicinnamic acid 1,2-dioxygenase (316 aa).

His118 acts as the Proton donor in catalysis. Catalysis depends on His182, which acts as the Proton acceptor.

The protein belongs to the LigB/MhpB extradiol dioxygenase family. In terms of assembly, homotetramer. Requires Fe(2+) as cofactor.

It catalyses the reaction 3-(2,3-dihydroxyphenyl)propanoate + O2 = (2Z,4E)-2-hydroxy-6-oxonona-2,4-dienedioate + H(+). The enzyme catalyses (2E)-3-(2,3-dihydroxyphenyl)prop-2-enoate + O2 = (2Z,4E,7E)-2-hydroxy-6-oxonona-2,4,7-trienedioate + H(+). Its pathway is aromatic compound metabolism; 3-phenylpropanoate degradation. Its function is as follows. Catalyzes the non-heme iron(II)-dependent oxidative cleavage of 2,3-dihydroxyphenylpropionic acid and 2,3-dihydroxicinnamic acid into 2-hydroxy-6-ketononadienedioate and 2-hydroxy-6-ketononatrienedioate, respectively. This is 2,3-dihydroxyphenylpropionate/2,3-dihydroxicinnamic acid 1,2-dioxygenase from Mycolicibacterium vanbaalenii (strain DSM 7251 / JCM 13017 / BCRC 16820 / KCTC 9966 / NRRL B-24157 / PYR-1) (Mycobacterium vanbaalenii).